The primary structure comprises 338 residues: Tagatose 1,6-diphosphate aldolase (338 aa).

The protein belongs to the aldolase LacD family.

It carries out the reaction D-tagatofuranose 1,6-bisphosphate = D-glyceraldehyde 3-phosphate + dihydroxyacetone phosphate. The protein operates within carbohydrate metabolism; D-tagatose 6-phosphate degradation; D-glyceraldehyde 3-phosphate and glycerone phosphate from D-tagatose 6-phosphate: step 2/2. The protein is Tagatose 1,6-diphosphate aldolase of Listeria monocytogenes serotype 4b (strain CLIP80459).